The primary structure comprises 1200 residues: Chromosome partition protein Smc (1200 aa).

An ATP-binding site is contributed by 33–40; the sequence is PNGSGKSN. Positions 90 to 109 are disordered; that stretch reads GENLSEPGANHNGNGNGAKI. Positions 202-528 form a coiled coil; the sequence is EVQDREERCQ…AASQAQQEVQ (327 aa). The region spanning 542–656 is the SMC hinge domain; that stretch reads PGVCGLVAQL…VFDTLVNARN (115 aa). A coiled-coil region spans residues 692–1046; the sequence is TMVSEDTAEV…ERTELLLRIE (355 aa).

The protein belongs to the SMC family. In terms of assembly, homodimer.

It is found in the cytoplasm. Functionally, required for chromosome condensation and partitioning. The chain is Chromosome partition protein Smc from Synechocystis sp. (strain ATCC 27184 / PCC 6803 / Kazusa).